The sequence spans 678 residues: UvrABC system protein C (678 aa).

The GIY-YIG domain maps to 16–95; that stretch reads VEPGVYRFRD…IKEFDPRFNI (80 aa). The region spanning 208-243 is the UVR domain; the sequence is DRLIREMEQQMNAAAEELDFERAARLRDNIGAMRRA. The interval 477–508 is disordered; the sequence is HLRDAEAAPEGRPEQGPRASARPEQGPRASAR. A compositionally biased stretch (basic and acidic residues) spans 479–491; that stretch reads RDAEAAPEGRPEQ.

It belongs to the UvrC family. Interacts with UvrB in an incision complex.

It localises to the cytoplasm. The UvrABC repair system catalyzes the recognition and processing of DNA lesions. UvrC both incises the 5' and 3' sides of the lesion. The N-terminal half is responsible for the 3' incision and the C-terminal half is responsible for the 5' incision. The sequence is that of UvrABC system protein C from Mycolicibacterium vanbaalenii (strain DSM 7251 / JCM 13017 / BCRC 16820 / KCTC 9966 / NRRL B-24157 / PYR-1) (Mycobacterium vanbaalenii).